The following is a 500-amino-acid chain: Neuronal pentraxin receptor (500 aa).

Residues 1 to 2 (MK) lie on the Cytoplasmic side of the membrane. The chain crosses the membrane as a helical; Signal-anchor for type II membrane protein span at residues 3-23 (FLAVLLAAGMLAFLGAVICII). Residues 24 to 500 (ASVPLAASPA…FDVCKGRAKA (477 aa)) are Extracellular-facing. The N-linked (GlcNAc...) asparagine glycan is linked to asparagine 42. The segment covering 42–63 (NASVASGAAASPGPQRSLSALH) has biased composition (low complexity). Disordered regions lie at residues 42–81 (NASVASGAAASPGPQRSLSALHGAGGSAGPPALPGAPAAS) and 162–183 (ESGLPRGLQGAGPRRDTMADGP). An N-linked (GlcNAc...) asparagine glycan is attached at asparagine 216. The Pentraxin (PTX) domain maps to 292–494 (DAFKISIPIR…GATKAAFDVC (203 aa)). Cysteine 322 and cysteine 383 form a disulfide bridge. Residues asparagine 347, glutamate 425, glutamine 426, aspartate 427, and glutamine 437 each contribute to the Ca(2+) site. Asparagine 463 carries an N-linked (GlcNAc...) asparagine glycan.

As to quaternary structure, heteropentamer with NPTX1 and/or NPTX2. Also binds taipoxin-associated calcium-binding protein 49 (TCBP49/RCN2). Interacts with KLHL2. It depends on Ca(2+) as a cofactor. Ubiquitinated by a cullin-RING-based BCR (BTB-CUL3-RBX1) E3 ubiquitin-protein ligase complex containing KLHL2.

The protein resides in the membrane. Functionally, may be involved in mediating uptake of synaptic material during synapse remodeling or in mediating the synaptic clustering of AMPA glutamate receptors at a subset of excitatory synapses. This Homo sapiens (Human) protein is Neuronal pentraxin receptor (NPTXR).